The primary structure comprises 114 residues: MAEITSAKAMARTVRVSPRKSRLVLDNIRGKSVADAIAILTFTPNKAAEIILKVLNSAVANAENNFGLDKANLVVSEAFANEGPTMKRFRPRAKGSASPINKRTAHITVAVAEK.

It belongs to the universal ribosomal protein uL22 family. Part of the 50S ribosomal subunit.

Its function is as follows. This protein binds specifically to 23S rRNA; its binding is stimulated by other ribosomal proteins, e.g. L4, L17, and L20. It is important during the early stages of 50S assembly. It makes multiple contacts with different domains of the 23S rRNA in the assembled 50S subunit and ribosome. The globular domain of the protein is located near the polypeptide exit tunnel on the outside of the subunit, while an extended beta-hairpin is found that lines the wall of the exit tunnel in the center of the 70S ribosome. The polypeptide is Large ribosomal subunit protein uL22 (Streptococcus pneumoniae (strain Taiwan19F-14)).